We begin with the raw amino-acid sequence, 114 residues long: Large ribosomal subunit protein bL19 (114 aa).

The protein belongs to the bacterial ribosomal protein bL19 family.

In terms of biological role, this protein is located at the 30S-50S ribosomal subunit interface and may play a role in the structure and function of the aminoacyl-tRNA binding site. This Bacillus cytotoxicus (strain DSM 22905 / CIP 110041 / 391-98 / NVH 391-98) protein is Large ribosomal subunit protein bL19.